Reading from the N-terminus, the 100-residue chain is Urease subunit gamma (100 aa).

It belongs to the urease gamma subunit family. Heterotrimer of UreA (gamma), UreB (beta) and UreC (alpha) subunits. Three heterotrimers associate to form the active enzyme.

The protein resides in the cytoplasm. It catalyses the reaction urea + 2 H2O + H(+) = hydrogencarbonate + 2 NH4(+). It functions in the pathway nitrogen metabolism; urea degradation; CO(2) and NH(3) from urea (urease route): step 1/1. This is Urease subunit gamma from Proteus hauseri.